The primary structure comprises 418 residues: D-amino acid dehydrogenase (418 aa).

Residue 3-17 (VLVLGAGVAGVSSAW) coordinates FAD.

This sequence belongs to the DadA oxidoreductase family. It depends on FAD as a cofactor.

The enzyme catalyses a D-alpha-amino acid + A + H2O = a 2-oxocarboxylate + AH2 + NH4(+). It participates in amino-acid degradation; D-alanine degradation; NH(3) and pyruvate from D-alanine: step 1/1. Its function is as follows. Oxidative deamination of D-amino acids. The protein is D-amino acid dehydrogenase of Neisseria meningitidis serogroup C (strain 053442).